We begin with the raw amino-acid sequence, 261 residues long: Cytochrome c oxidase subunit 3 (261 aa).

Topologically, residues 1-15 (MTHQSHAYHMVKPSP) are mitochondrial matrix. The chain crosses the membrane as a helical span at residues 16–34 (WPLTGALSALLMTSGLAMW). The Mitochondrial intermembrane segment spans residues 35 to 40 (FHFHSM). A helical membrane pass occupies residues 41 to 66 (TLLMLGLLTNTLTMYQWWRDVTREST). Residues 67-72 (YQGHHT) lie on the Mitochondrial matrix side of the membrane. Residues 73–105 (PPVQKGLRYGMILFITSEVFFFAGFFWAFYHSS) form a helical membrane-spanning segment. The Mitochondrial intermembrane portion of the chain corresponds to 106 to 128 (LAPTPQLGGHWPPTGITPLNPLE). The helical transmembrane segment at 129-152 (VPLLNTSVLLASGVSITWAHHSLM) threads the bilayer. Over 153–155 (ENN) the chain is Mitochondrial matrix. A helical membrane pass occupies residues 156–183 (RNQMIQALLITILLGLYFTLLQASEYFE). The Mitochondrial intermembrane segment spans residues 184–190 (SPFTISD). The helical transmembrane segment at 191–223 (GIYGSTFFVATGFHGLHVIIGSTFLTICFIRQL) threads the bilayer. Residues 224-232 (MFHFTSKHH) are Mitochondrial matrix-facing. A helical transmembrane segment spans residues 233–256 (FGFEAAAWYWHFVDVVWLFLYVSI). Residues 257–261 (YWWGS) lie on the Mitochondrial intermembrane side of the membrane.

The protein belongs to the cytochrome c oxidase subunit 3 family. In terms of assembly, component of the cytochrome c oxidase (complex IV, CIV), a multisubunit enzyme composed of 14 subunits. The complex is composed of a catalytic core of 3 subunits MT-CO1, MT-CO2 and MT-CO3, encoded in the mitochondrial DNA, and 11 supernumerary subunits COX4I1 (or COX4I2), COX5A, COX5B, COX6A1 (or COX6A2), COX6B1 (or COX6B2), COX6C, COX7A2 (or COX7A1), COX7B, COX7C, COX8A and NDUFA4, which are encoded in the nuclear genome. The complex exists as a monomer or a dimer and forms supercomplexes (SCs) in the inner mitochondrial membrane with NADH-ubiquinone oxidoreductase (complex I, CI) and ubiquinol-cytochrome c oxidoreductase (cytochrome b-c1 complex, complex III, CIII), resulting in different assemblies (supercomplex SCI(1)III(2)IV(1) and megacomplex MCI(2)III(2)IV(2)).

It is found in the mitochondrion inner membrane. The enzyme catalyses 4 Fe(II)-[cytochrome c] + O2 + 8 H(+)(in) = 4 Fe(III)-[cytochrome c] + 2 H2O + 4 H(+)(out). In terms of biological role, component of the cytochrome c oxidase, the last enzyme in the mitochondrial electron transport chain which drives oxidative phosphorylation. The respiratory chain contains 3 multisubunit complexes succinate dehydrogenase (complex II, CII), ubiquinol-cytochrome c oxidoreductase (cytochrome b-c1 complex, complex III, CIII) and cytochrome c oxidase (complex IV, CIV), that cooperate to transfer electrons derived from NADH and succinate to molecular oxygen, creating an electrochemical gradient over the inner membrane that drives transmembrane transport and the ATP synthase. Cytochrome c oxidase is the component of the respiratory chain that catalyzes the reduction of oxygen to water. Electrons originating from reduced cytochrome c in the intermembrane space (IMS) are transferred via the dinuclear copper A center (CU(A)) of subunit 2 and heme A of subunit 1 to the active site in subunit 1, a binuclear center (BNC) formed by heme A3 and copper B (CU(B)). The BNC reduces molecular oxygen to 2 water molecules using 4 electrons from cytochrome c in the IMS and 4 protons from the mitochondrial matrix. The protein is Cytochrome c oxidase subunit 3 (MT-CO3) of Homo sapiens (Human).